Here is a 125-residue protein sequence, read N- to C-terminus: Protein ApaG (125 aa).

Residues 1–125 form the ApaG domain; it reads MINSPRVCVQ…FRLAVPTLIH (125 aa).

The chain is Protein ApaG from Klebsiella pneumoniae (strain 342).